The primary structure comprises 434 residues: Serine hydroxymethyltransferase 2 (434 aa).

Residues Leu136 and 140–142 each bind (6S)-5,6,7,8-tetrahydrofolate; that span reads GHL. Lys245 carries the post-translational modification N6-(pyridoxal phosphate)lysine.

Belongs to the SHMT family. Homodimer. The cofactor is pyridoxal 5'-phosphate.

It localises to the cytoplasm. It carries out the reaction (6R)-5,10-methylene-5,6,7,8-tetrahydrofolate + glycine + H2O = (6S)-5,6,7,8-tetrahydrofolate + L-serine. It functions in the pathway one-carbon metabolism; tetrahydrofolate interconversion. Its pathway is amino-acid biosynthesis; glycine biosynthesis; glycine from L-serine: step 1/1. In terms of biological role, catalyzes the reversible interconversion of serine and glycine with tetrahydrofolate (THF) serving as the one-carbon carrier. This reaction serves as the major source of one-carbon groups required for the biosynthesis of purines, thymidylate, methionine, and other important biomolecules. Also exhibits THF-independent aldolase activity toward beta-hydroxyamino acids, producing glycine and aldehydes, via a retro-aldol mechanism. In Rhodopseudomonas palustris (strain ATCC BAA-98 / CGA009), this protein is Serine hydroxymethyltransferase 2.